The chain runs to 120 residues: NAD(P)H-quinone oxidoreductase subunit 3, chloroplastic (120 aa).

The next 3 helical transmembrane spans lie at 9–29 (IFWA…FVSG), 64–84 (MFAL…PWAM), and 88–108 (VLGI…IVGL).

The protein belongs to the complex I subunit 3 family. In terms of assembly, NDH is composed of at least 16 different subunits, 5 of which are encoded in the nucleus.

The protein resides in the plastid. The protein localises to the chloroplast thylakoid membrane. The enzyme catalyses a plastoquinone + NADH + (n+1) H(+)(in) = a plastoquinol + NAD(+) + n H(+)(out). It carries out the reaction a plastoquinone + NADPH + (n+1) H(+)(in) = a plastoquinol + NADP(+) + n H(+)(out). Functionally, NDH shuttles electrons from NAD(P)H:plastoquinone, via FMN and iron-sulfur (Fe-S) centers, to quinones in the photosynthetic chain and possibly in a chloroplast respiratory chain. The immediate electron acceptor for the enzyme in this species is believed to be plastoquinone. Couples the redox reaction to proton translocation, and thus conserves the redox energy in a proton gradient. The sequence is that of NAD(P)H-quinone oxidoreductase subunit 3, chloroplastic from Daucus carota (Wild carrot).